The chain runs to 423 residues: F-box/LRR-repeat protein 2 (423 aa).

One can recognise an F-box domain in the interval G9–I55. LRR repeat units follow at residues Q61–G87, C88–G113, C114–S139, C140–W165, C166–G191, C192–S217, C218–G243, C244–R269, C270–E295, C296–H321, C322–N350, C351–D375, and C376–A401. Residues L80–G90 form an interaction with Calmodulin region. Residue K201 forms a Glycyl lysine isopeptide (Lys-Gly) (interchain with G-Cter in ubiquitin) linkage. Phosphothreonine is present on T404. A lipid anchor (S-geranylgeranyl cysteine) is attached at C420. The CAAX motif signature appears at C420–L423.

As to quaternary structure, part of the SCF (SKP1-CUL1-F-box) E3 ubiquitin-protein ligase complex SCF(FBXL2) composed of CUL1, SKP1, RBX1 and FBXL2. Interacts with calmodulin; may antagonize substrate ubiquitination by SCF(FBXL2). May interact with PIK3R1. Interacts with PTPN13. In terms of assembly, (Microbial infection) Interacts with hepatitis C virus non-structural protein 5A (NS5A) and less efficiently, with hepatitis C virus non-structural protein 5B (NS5B); a reaction crucial for hepatitis C virus RNA replication. In terms of processing, phosphorylated by GSK-beta (GSK3B), promoting recognition by FBXO3, leading to its ubiquitination by the SCF(FBXO3) complex. Ubiquitinated at Lys-201 by the SCF(FBXO3) complex in response to lipopolysaccharide (LPS), leading to its degradation by the proteasome. As to expression, expressed in brain, heart, kidney, liver, lung, pancreas and placenta.

It is found in the membrane. Its pathway is protein modification; protein ubiquitination. Its function is as follows. Calcium-activated substrate recognition component of the SCF (SKP1-cullin-F-box protein) E3 ubiquitin-protein ligase complex, SCF(FBXL2), which mediates the ubiquitination and subsequent proteasomal degradation of target proteins. Unlike many F-box proteins, FBXL2 does not seem to target phosphodegron within its substrates but rather calmodulin-binding motifs and is thereby antagonized by calmodulin. This is the case for the cyclins CCND2 and CCND3 which polyubiquitination and subsequent degradation are inhibited by calmodulin. Through CCND2 and CCND3 degradation induces cell-cycle arrest in G(0). SCF(FBXL2) also mediates PIK3R2 ubiquitination and proteasomal degradation thereby regulating phosphatidylinositol 3-kinase signaling and autophagy. PCYT1A monoubiquitination by SCF(FBXL2) and subsequent degradation regulates synthesis of phosphatidylcholine, which is utilized for formation of membranes and of pulmonary surfactant. The SCF(FBXL2) complex acts as a regulator of inflammation by mediating ubiquitination and degradation of TRAF proteins (TRAF1, TRAF2, TRAF3, TRAF4, TRAF5 and TRAF6). The SCF(FBXL2) complex acts as a negative regulator of the NLRP3 inflammasome by mediating ubiquitination and degradation of NLRP3. The protein is F-box/LRR-repeat protein 2 of Homo sapiens (Human).